The following is a 115-amino-acid chain: Selenoprotein K homolog (115 aa).

Residues 29 to 49 (FIWGILNQITFFFSTLIGGTV) form a helical membrane-spanning segment. The segment at 48 to 115 (TVEPRRRPNN…NSASGSUGPK (68 aa)) is disordered. Residues 58-84 (QGGGRRLAGFDGNGNVTGGSGVGGSGP) are compositionally biased toward gly residues. Residues 104 to 115 (ACNSASGSUGPK) are compositionally biased toward polar residues. Residue Sec-112 is a non-standard amino acid, selenocysteine.

It belongs to the selenoprotein K family.

It is found in the membrane. This chain is Selenoprotein K homolog (selk), found in Dictyostelium discoideum (Social amoeba).